The sequence spans 188 residues: Josephin-2 (188 aa).

A Josephin domain is found at 11–188 (PPSVYHERQR…EEAGCWLNTS (178 aa)). C24 acts as the Nucleophile in catalysis. H125 serves as the catalytic Proton acceptor.

The protein resides in the cytoplasm. The protein localises to the cytosol. The enzyme catalyses Thiol-dependent hydrolysis of ester, thioester, amide, peptide and isopeptide bonds formed by the C-terminal Gly of ubiquitin (a 76-residue protein attached to proteins as an intracellular targeting signal).. In terms of biological role, cleaves 'Lys-63'-linked poly-ubiquitin chains, and with lesser efficiency 'Lys-48'-linked poly-ubiquitin chains (in vitro). May act as a deubiquitinating enzyme. In Mus musculus (Mouse), this protein is Josephin-2 (Josd2).